The following is a 187-amino-acid chain: PsbQ-like protein 3, chloroplastic (187 aa).

Residues 1-32 constitute a chloroplast transit peptide; sequence MAISKPPPLHFTFFHNQDSSIDTSDSNLALSI. The transit peptide at 33–60 directs the protein to the thylakoid; sequence DTSRRRRDVLLTISGTLIPQLFFFDRKR.

This sequence belongs to the PsbQ family. As to quaternary structure, subunit of the lumenal protuberance of the NDH complex.

The protein localises to the plastid. The protein resides in the chloroplast thylakoid membrane. Its function is as follows. Required for both formation and activity of the chloroplast NAD(P)H dehydrogenase (NDH) complex. This chain is PsbQ-like protein 3, chloroplastic (PQL3), found in Arabidopsis thaliana (Mouse-ear cress).